We begin with the raw amino-acid sequence, 179 residues long: MRIEVWQGDITQLDVDVIVNAANESLLGGGGVDGAIHRAAGPRLLEACEALPEVRPGVRCPTGEIRITDGFDLKARHIFHTVGPVWRDGKHNEPEQLANCYWQSLKLAEQMMLHSIAFPAISCGIYGYPLYQAARIAVTETRDWQRSHKVPKHIVLVAYNEATYKAYHQALATQETAAA.

The Macro domain occupies 1-175; that stretch reads MRIEVWQGDI…AYHQALATQE (175 aa).

This sequence belongs to the MacroD-type family.

The sequence is that of Macro domain-containing protein XCC3184 from Xanthomonas campestris pv. campestris (strain ATCC 33913 / DSM 3586 / NCPPB 528 / LMG 568 / P 25).